We begin with the raw amino-acid sequence, 1248 residues long: ABC transporter B family member 7 (1248 aa).

Helical transmembrane passes span 32-52 (IVLM…QPFM), 82-102 (FLYL…CWMV), 158-175 (FTQL…AFIV), 179-201 (LTLA…TYIM), 261-281 (GLGI…AIWY), and 299-321 (VITS…NSFA). An ABC transmembrane type-1 1 domain is found at 35–322 (MVIGTLSAMA…TLPSLNSFAA (288 aa)). Residues 357-593 (IELRDVYFRY…PEGTYSQLVR (237 aa)) enclose the ABC transporter 1 domain. Residue 392–399 (GQSGSGKS) participates in ATP binding. N-linked (GlcNAc...) asparagine glycosylation is found at Asn-473 and Asn-652. Residues 682–702 (VLLLGSLAAVIHGIVFPVQGL) form a helical membrane-spanning segment. Positions 683–970 (LLLGSLAAVI…TSTMAPDINK (288 aa)) constitute an ABC transmembrane type-1 2 domain. Asn-720 carries N-linked (GlcNAc...) asparagine glycosylation. The chain crosses the membrane as a helical span at residues 722–742 (SLFWALIFVALGLTDLIVIPL). Asn-779 carries an N-linked (GlcNAc...) asparagine glycan. A run of 4 helical transmembrane segments spans residues 813–833 (IIGA…MALL), 834–854 (VAPV…GFGA), 914–934 (GSYL…SWLI), and 939–959 (ATFG…VGVT). The 238-residue stretch at 1005 to 1242 (IELQHVSFRY…SGGAYASLVA (238 aa)) folds into the ABC transporter 2 domain. 1040 to 1047 (GESGSGKS) is a binding site for ATP. Asn-1094, Asn-1193, and Asn-1244 each carry an N-linked (GlcNAc...) asparagine glycan.

It belongs to the ABC transporter superfamily. ABCB family. Multidrug resistance exporter (TC 3.A.1.201) subfamily.

The protein localises to the membrane. The sequence is that of ABC transporter B family member 7 (ABCB7) from Arabidopsis thaliana (Mouse-ear cress).